A 150-amino-acid chain; its full sequence is SsrA-binding protein (150 aa).

This sequence belongs to the SmpB family.

The protein resides in the cytoplasm. Its function is as follows. Required for rescue of stalled ribosomes mediated by trans-translation. Binds to transfer-messenger RNA (tmRNA), required for stable association of tmRNA with ribosomes. tmRNA and SmpB together mimic tRNA shape, replacing the anticodon stem-loop with SmpB. tmRNA is encoded by the ssrA gene; the 2 termini fold to resemble tRNA(Ala) and it encodes a 'tag peptide', a short internal open reading frame. During trans-translation Ala-aminoacylated tmRNA acts like a tRNA, entering the A-site of stalled ribosomes, displacing the stalled mRNA. The ribosome then switches to translate the ORF on the tmRNA; the nascent peptide is terminated with the 'tag peptide' encoded by the tmRNA and targeted for degradation. The ribosome is freed to recommence translation, which seems to be the essential function of trans-translation. The sequence is that of SsrA-binding protein from Campylobacter jejuni subsp. doylei (strain ATCC BAA-1458 / RM4099 / 269.97).